A 345-amino-acid polypeptide reads, in one-letter code: L-threonine 3-dehydrogenase (345 aa).

Position 42 (Cys-42) interacts with Zn(2+). Residues Thr-44 and His-47 each act as charge relay system in the active site. Zn(2+) contacts are provided by His-67, Glu-68, Cys-97, Cys-100, Cys-103, and Cys-111. Residues Ile-179, Asp-199, Arg-204, Leu-266 to Ile-268, and Ile-290 to Tyr-291 contribute to the NAD(+) site.

It belongs to the zinc-containing alcohol dehydrogenase family. In terms of assembly, homotetramer. The cofactor is Zn(2+).

It localises to the cytoplasm. The enzyme catalyses L-threonine + NAD(+) = (2S)-2-amino-3-oxobutanoate + NADH + H(+). It functions in the pathway amino-acid degradation; L-threonine degradation via oxydo-reductase pathway; glycine from L-threonine: step 1/2. Functionally, catalyzes the NAD(+)-dependent oxidation of L-threonine to 2-amino-3-ketobutyrate. This chain is L-threonine 3-dehydrogenase, found in Rhizobium johnstonii (strain DSM 114642 / LMG 32736 / 3841) (Rhizobium leguminosarum bv. viciae).